Here is a 303-residue protein sequence, read N- to C-terminus: Oxygen-dependent coproporphyrinogen-III oxidase (303 aa).

Position 94 (S94) interacts with substrate. A divalent metal cation contacts are provided by H98 and H108. The Proton donor role is filled by H108. Residue 110 to 112 (NVR) participates in substrate binding. A divalent metal cation contacts are provided by H147 and H177. Positions 242-277 (YVEFNLVYDRGTLFGLQTGGRTESILMSLPPLVRWE) are important for dimerization. Residue 260–262 (GGR) coordinates substrate.

It belongs to the aerobic coproporphyrinogen-III oxidase family. Homodimer. Requires a divalent metal cation as cofactor.

Its subcellular location is the cytoplasm. The catalysed reaction is coproporphyrinogen III + O2 + 2 H(+) = protoporphyrinogen IX + 2 CO2 + 2 H2O. It participates in porphyrin-containing compound metabolism; protoporphyrin-IX biosynthesis; protoporphyrinogen-IX from coproporphyrinogen-III (O2 route): step 1/1. Functionally, involved in the heme biosynthesis. Catalyzes the aerobic oxidative decarboxylation of propionate groups of rings A and B of coproporphyrinogen-III to yield the vinyl groups in protoporphyrinogen-IX. This is Oxygen-dependent coproporphyrinogen-III oxidase from Saccharophagus degradans (strain 2-40 / ATCC 43961 / DSM 17024).